The following is a 148-amino-acid chain: Large ribosomal subunit protein bL9 (148 aa).

The protein belongs to the bacterial ribosomal protein bL9 family.

In terms of biological role, binds to the 23S rRNA. The protein is Large ribosomal subunit protein bL9 of Frankia alni (strain DSM 45986 / CECT 9034 / ACN14a).